The following is a 319-amino-acid chain: Acetyl-coenzyme A carboxylase carboxyl transferase subunit alpha (319 aa).

One can recognise a CoA carboxyltransferase C-terminal domain in the interval D35 to D296.

It belongs to the AccA family. In terms of assembly, acetyl-CoA carboxylase is a heterohexamer composed of biotin carboxyl carrier protein (AccB), biotin carboxylase (AccC) and two subunits each of ACCase subunit alpha (AccA) and ACCase subunit beta (AccD).

The protein resides in the cytoplasm. It carries out the reaction N(6)-carboxybiotinyl-L-lysyl-[protein] + acetyl-CoA = N(6)-biotinyl-L-lysyl-[protein] + malonyl-CoA. Its pathway is lipid metabolism; malonyl-CoA biosynthesis; malonyl-CoA from acetyl-CoA: step 1/1. Its function is as follows. Component of the acetyl coenzyme A carboxylase (ACC) complex. First, biotin carboxylase catalyzes the carboxylation of biotin on its carrier protein (BCCP) and then the CO(2) group is transferred by the carboxyltransferase to acetyl-CoA to form malonyl-CoA. The sequence is that of Acetyl-coenzyme A carboxylase carboxyl transferase subunit alpha from Vibrio campbellii (strain ATCC BAA-1116).